The primary structure comprises 478 residues: Septin-4 (478 aa).

A disordered region spans residues 1 to 115 (MDHSLGWQGN…RSPWGKLDPY (115 aa)). Ser-28, Ser-29, and Ser-68 each carry phosphoserine. Residues 84–93 (PQPSDSQQYF) are compositionally biased toward polar residues. Residues 94 to 108 (SAPAPLSPSSRPRSP) are compositionally biased toward low complexity. Ser-117 and Ser-118 each carry phosphoserine. The region spanning 141–414 (KGFDFTLMVA…ENYRAQCIQS (274 aa)) is the Septin-type G domain. The tract at residues 151–158 (GESGLGKS) is G1 motif. GTP-binding positions include 151 to 158 (GESGLGKS) and Thr-185. The G3 motif stretch occupies residues 208–211 (DTPG). Residues 289 to 292 (AKAD) are G4 motif. A GTP-binding site is contributed by 290–298 (KADTLTPPE). Ser-325 bears the Phosphoserine mark. GTP is bound by residues Gly-348 and Arg-363. The segment at 428-449 (LTRESGTDFPIPAVPPGTDPET) is disordered. Phosphoserine is present on Ser-432. Thr-434 is subject to Phosphothreonine. Positions 447 to 478 (PETEKLIREKDEELRRMQEMLHKIQRQMKETH) form a coiled coil.

It belongs to the TRAFAC class TrmE-Era-EngA-EngB-Septin-like GTPase superfamily. Septin GTPase family. Septins polymerize into heterooligomeric protein complexes that form filaments, and can associate with cellular membranes, actin filaments and microtubules. GTPase activity is required for filament formation. Interacts with SEPTIN8. Component of a septin core octameric complex consisting of SEPTIN12, SEPTIN7, SEPTIN6 and SEPTIN2 or SEPTIN4 in the order 12-7-6-2-2-6-7-12 or 12-7-6-4-4-6-7-12. Interacts with SEPTIN14 (via C-terminus). Interacts with DYRK1A. Interacts with SLC6A3/DAT and SNCA/alpha-synuclein. Interacts with STX1A; in the striatum. Interacts with XIAP (via BIR3 domain) following the induction of apoptosis. Interacts with AREL1 (via HECT domain); in the cytoplasm following induction of apoptosis. As to quaternary structure, interacts with DPYSL5. Phosphorylated by DYRK1A. Post-translationally, ubiquitinated by AREL1. In terms of processing, may be phosphorylated. In terms of tissue distribution, expressed in the cerebral cortex, striatum, midbrain, cerebellum and spinal cord (at protein level). Expressed in the substantia nigra pars compacta, ventral tegmental area, projection fiber bundles and in axon terminals surrounding striatal neurons (at protein level). Expressed in hair follicle stem cells (at protein level). Expressed in small intestinal crypts; abundantly expressed at the crypt base (at protein level). Widely expressed in the brain and to a lesser extent in the testis, lung and liver. Highly expressed in the brain and testis and, to a lesser extent in the heart, lung and kidney. In the brain, abundant in areas of high cell density, particularly in the stria terminalis. Expressed in the entorhinal, temporal and visual cortices and the hippocampus of the brain where is colocalizes with DYRK1A in postnatal day 1 and adult mice. Expressed and extensively colocalizes with DYRK1A in apical dendrites of pyramidal cells. As to expression, predominantly expressed in embryonic brain and dorsal root ganglion neurons. In terms of tissue distribution, expressed in LGR5-positive intestinal stem cells and lysozyme-positive Paneth cells (at protein level). Expressed in the brain and testis.

The protein resides in the cytoplasm. Its subcellular location is the cell projection. It is found in the cilium. It localises to the flagellum. The protein localises to the cytoplasmic vesicle. The protein resides in the secretory vesicle. Its subcellular location is the axon. It is found in the dendrite. It localises to the perikaryon. The protein localises to the synapse. The protein resides in the mitochondrion. Its subcellular location is the cytosol. Filament-forming cytoskeletal GTPase. Pro-apoptotic protein involved in LGR5-positive intestinal stem cell and Paneth cell expansion in the intestines, via its interaction with XIAP. May also play a role in the regulation of cell fate in the intestine. Positive regulator of apoptosis involved in hematopoietic stem cell homeostasis; via its interaction with XIAP. Negative regulator of repair and hair follicle regeneration in response to injury, due to inhibition of hair follicle stem cell proliferation, potentially via its interaction with XIAP. Plays an important role in male fertility and sperm motility. During spermiogenesis, essential for the establishment of the annulus (a fibrous ring structure connecting the midpiece and the principal piece of the sperm flagellum) which is a requisite for the structural and mechanical integrity of the sperm. Involved in the migration of cortical neurons and the formation of neuron leading processes during embryonic development. Required for dopaminergic metabolism in presynaptic autoreceptors; potentially via activity as a presynaptic scaffold protein. The protein is Septin-4 of Mus musculus (Mouse).